Here is a 97-residue protein sequence, read N- to C-terminus: Co-chaperonin GroES (97 aa).

Belongs to the GroES chaperonin family. In terms of assembly, heptamer of 7 subunits arranged in a ring. Interacts with the chaperonin GroEL.

It is found in the cytoplasm. Its function is as follows. Together with the chaperonin GroEL, plays an essential role in assisting protein folding. The GroEL-GroES system forms a nano-cage that allows encapsulation of the non-native substrate proteins and provides a physical environment optimized to promote and accelerate protein folding. GroES binds to the apical surface of the GroEL ring, thereby capping the opening of the GroEL channel. This chain is Co-chaperonin GroES, found in Ectopseudomonas mendocina (strain ymp) (Pseudomonas mendocina).